Here is a 1410-residue protein sequence, read N- to C-terminus: Endoribonuclease Dicer homolog 2a (1410 aa).

The segment covering 1 to 15 (MGGPLTAAGGRGDGG) has biased composition (gly residues). A disordered region spans residues 1-30 (MGGPLTAAGGRGDGGAKAVEPLRPPPPPDP). Positions 41–222 (ALERAVRGNT…HNYSKQISEI (182 aa)) constitute a Helicase ATP-binding domain. Residue 54-61 (LETGSGKT) participates in ATP binding. A DECH box motif is present at residues 163–166 (DECH). A Helicase C-terminal domain is found at 388–561 (TLLQYRHMQD…DTYYRVESTR (174 aa)). Residues 569–655 (SVPLIHFFCS…LPELDVPCDE (87 aa)) form the Dicer dsRNA-binding fold domain. The 116-residue stretch at 827–942 (KDIDLLQTKD…LPPELCRIIM (116 aa)) folds into the PAZ domain. 2 RNase III domains span residues 969 to 1124 (SVKL…STAG) and 1161 to 1308 (VRSL…LDSK). Glutamate 1200, aspartate 1294, and glutamate 1297 together coordinate Mg(2+). The region spanning 1334–1400 (DPVKGLQEFC…SKAVLKDLIA (67 aa)) is the DRBM domain.

Belongs to the helicase family. Dicer subfamily. May interact with ARGONAUTE1 or PINHEAD through their common PAZ domains. Mg(2+) is required as a cofactor. Requires Mn(2+) as cofactor.

The protein localises to the nucleus. Probably involved in the RNA silencing pathway. May cleave double-stranded RNA to produce short 21-24 nucleotides (nt) RNAs which target the selective destruction of complementary RNAs. This is Endoribonuclease Dicer homolog 2a (DCL2A) from Oryza sativa subsp. japonica (Rice).